The following is a 249-amino-acid chain: Proteasome subunit alpha type-3 (249 aa).

Belongs to the peptidase T1A family. As to quaternary structure, the 26S proteasome consists of a 20S proteasome core and two 19S regulatory subunits. The 20S proteasome core is composed of 28 subunits that are arranged in four stacked rings, resulting in a barrel-shaped structure. The two end rings are each formed by seven alpha subunits, and the two central rings are each formed by seven beta subunits. The catalytic chamber with the active sites is on the inside of the barrel.

Its subcellular location is the cytoplasm. The protein localises to the nucleus. The proteasome is a multicatalytic proteinase complex which is characterized by its ability to cleave peptides with Arg, Phe, Tyr, Leu, and Glu adjacent to the leaving group at neutral or slightly basic pH. The proteasome has an ATP-dependent proteolytic activity. The sequence is that of Proteasome subunit alpha type-3 (PAG1) from Oryza sativa subsp. japonica (Rice).